Here is a 184-residue protein sequence, read N- to C-terminus: 3-hydroxyanthranilate 3,4-dioxygenase (184 aa).

Arg44 lines the O2 pocket. Residues His48, Glu54, and His92 each coordinate Fe cation. Glu54 serves as a coordination point for substrate. Substrate-binding residues include Arg96 and Glu106. Residues Cys121, Cys126, Cys162, and Cys165 each coordinate a divalent metal cation.

The protein belongs to the 3-HAO family. Fe(2+) serves as cofactor.

It is found in the cytoplasm. The catalysed reaction is 3-hydroxyanthranilate + O2 = (2Z,4Z)-2-amino-3-carboxymuconate 6-semialdehyde. It functions in the pathway cofactor biosynthesis; NAD(+) biosynthesis; quinolinate from L-kynurenine: step 3/3. Catalyzes the oxidative ring opening of 3-hydroxyanthranilate to 2-amino-3-carboxymuconate semialdehyde, which spontaneously cyclizes to quinolinate. This Pyricularia oryzae (strain 70-15 / ATCC MYA-4617 / FGSC 8958) (Rice blast fungus) protein is 3-hydroxyanthranilate 3,4-dioxygenase.